Consider the following 42-residue polypeptide: Large ribosomal subunit protein bL36 (42 aa).

The protein belongs to the bacterial ribosomal protein bL36 family.

The polypeptide is Large ribosomal subunit protein bL36 (Ehrlichia ruminantium (strain Gardel)).